The following is a 723-amino-acid chain: Choline transporter-like protein 4 (723 aa).

Over 1 to 36 (MGKKKQEEEQNSSEYGAPAQYDPTFNGPIHKRSCTD) the chain is Cytoplasmic. The helical transmembrane segment at 37-57 (IICCVLFMLVITGYMVVGILA) threads the bilayer. The Extracellular portion of the chain corresponds to 58–245 (WLYGDPRHVL…RIFEDFAKTW (188 aa)). Residues asparagine 71, asparagine 202, asparagine 211, and asparagine 219 are each glycosylated (N-linked (GlcNAc...) asparagine). The chain crosses the membrane as a helical span at residues 246–266 (QWIVAGLVIAMVVSVLFLLLL). The Cytoplasmic portion of the chain corresponds to 267–269 (RFT). Residues 270–290 (APVLIWILIFGVLAVGAFGIW) traverse the membrane as a helical segment. The Extracellular portion of the chain corresponds to 291-325 (YCYNDYMSLASSNLTFSNVGFTTNVQVYLQVRDTW). Asparagine 303 is a glycosylation site (N-linked (GlcNAc...) asparagine). Residues 326–346 (LAFLIILCIVEAVLILALIFL) form a helical membrane-spanning segment. Residues 347–374 (RTRILIAIALIQETSKALGHMMSTLLYP) lie on the Cytoplasmic side of the membrane. A helical membrane pass occupies residues 375 to 395 (VVTFVLLLVCVSYWGITALYL). Over 396 to 464 (ATSGAPIYKV…RNLFNLQIYN (69 aa)) the chain is Extracellular. N-linked (GlcNAc...) asparagine glycans are attached at residues asparagine 409, asparagine 421, and asparagine 430. Residues 465–485 (VVAFLWCVNFVIALGHCTLAG) form a helical membrane-spanning segment. The Cytoplasmic segment spans residues 486–516 (AFASYYWAFSKPADIPTFPLTQSFMRALRYH). The chain crosses the membrane as a helical span at residues 517–537 (VGSLAFGALILTLVQIVRIIL). The Extracellular portion of the chain corresponds to 538-578 (EYLDHKFKAAQNPCARFLMCCLKCCFWCLEKFIKFINRNAY). Residues 579–599 (IMIAIYGKNFCVSAKNAFFLL) traverse the membrane as a helical segment. The Cytoplasmic segment spans residues 600 to 615 (MRNIVRVVVLDKVTDL). Residues 616–636 (LLFFGKLLVVGGIGVLAFFFF) traverse the membrane as a helical segment. Residues 637 to 655 (SGRIQLPGNTFQTAALNYY) are Extracellular-facing. The chain crosses the membrane as a helical span at residues 656-676 (WMPIITVVFGAYLIAHGFFSV). The Cytoplasmic segment spans residues 677 to 723 (YNMGVDTLFLCFLEDLERNDGSAEKPYFMSKNLMKILNKKNKQPKTG).

The protein belongs to the CTL (choline transporter-like) family.

It localises to the membrane. The protein resides in the apical cell membrane. The catalysed reaction is choline(out) + n H(+)(in) = choline(in) + n H(+)(out). It catalyses the reaction thiamine diphosphate(out) = thiamine diphosphate(in). Functionally, choline transporter that seems to play a role in the choline-acetylcholine system and is required to the efferent innervation of hair cells in the olivocochlear bundle for the maintenance of physiological function of outer hair cells and the protection of hair cells from acoustic injury. Also described as a thiamine pyrophosphate transporter. The protein is Choline transporter-like protein 4 (slc44a4) of Danio rerio (Zebrafish).